We begin with the raw amino-acid sequence, 582 residues long: Leucine-rich repeat protein SHOC-2 (582 aa).

Composition is skewed to basic and acidic residues over residues 1 to 29 (MSSS…KEAK) and 36 to 57 (KESK…KKDS). Residues 1–88 (MSSSLGKEKD…PGTRKKSSNA (88 aa)) form a disordered region. The RVxF motif; important for interaction with PP1c motif lies at 63–66 (GVAF). LRR repeat units lie at residues 101–122 (NSMR…IKEL), 124–145 (QLTE…VGCL), 147–169 (NLMT…DNLK), 170–191 (KLRM…VYRL), 193–214 (SLTT…IKNL), 216–237 (KLSM…IGEL), 239–260 (NLIT…IGNC), 262–283 (QITN…IGNL), 285–307 (SLSR…AKCS), 308–329 (ALEE…LLSS), 332–353 (KLNS…GPSQ), 356–377 (TIYS…IFSR), 380–400 (VLSK…DFGT), 403–424 (SMVE…VSGL), 426–448 (SLEV…GNLR), 449–470 (KLRE…IAYL), 472–494 (DLQK…GHLT), 495–516 (NLTH…IGTL), 518–540 (NLEE…LALC), and 542–563 (KLSI…IVAG).

The protein belongs to the SHOC2 family. In terms of assembly, component of the SHOC2-MRAS-PP1c (SMP) complex consisting of SHOC2, GTP-bound M-Ras/MRAS and the catalytic subunit of protein phosphatase 1 (either PPP1CA, PPP1CB or PPP1CC). SHOC2 and PP1c preferably bind M-Ras/MRAS, but they also bind K-Ras/KRAS, N-Ras/NRAS and H-Ras/HRAS; these interactions are GTP-dependent and both SHOC2 and PP1c are required to form a stable complex. Interacts with PP1c in the absence of Ras GTPases. Interacts with M-Ras/MRAS and RAF1. Interacts with ERBIN; disrupts the interaction with RAF1 and Ras, preventing the activation of the Ras signaling pathway. Interacts with LZTR1.

Its subcellular location is the cytoplasm. The protein localises to the nucleus. Its function is as follows. Core component of the SHOC2-MRAS-PP1c (SMP) holophosphatase complex that regulates activation of the MAPK pathway. Acts as a scaffolding protein in the SMP complex. The SMP complex specifically dephosphorylates the inhibitory phosphorylation at 'Ser-259' of RAF1 kinase, 'Ser-365' of BRAF kinase and 'Ser-214' of ARAF kinase, stimulating their kinase activities. The SMP complex enhances the dephosphorylation activity and substrate specificity of PP1c. The polypeptide is Leucine-rich repeat protein SHOC-2 (SHOC2) (Homo sapiens (Human)).